The chain runs to 501 residues: Phosphoethanolamine N-methyltransferase 1 (501 aa).

6 residues coordinate S-adenosyl-L-homocysteine: Gly-72, Arg-77, Asp-93, Asp-118, Val-119, and Asn-137. Ser-170, Thr-175, Gly-176, Arg-180, and Tyr-187 together coordinate phosphocholine. N-methylethanolamine phosphate-binding positions include Gln-256–Tyr-257 and Tyr-265. Tyr-265 provides a ligand contact to phosphocholine. S-adenosyl-L-homocysteine contacts are provided by Val-274, Ser-275, Gly-301, Asp-323, Asp-349, Cys-350, and Arg-366. Phosphocholine-binding residues include Tyr-397, Tyr-411, Arg-415, Tyr-417, and Lys-483. N-methylethanolamine phosphate contacts are provided by residues Tyr-397, Tyr-411, Arg-415 to Tyr-417, and Lys-483.

This sequence belongs to the class I-like SAM-binding methyltransferase superfamily. PEAMT family.

It catalyses the reaction phosphoethanolamine + S-adenosyl-L-methionine = N-methylethanolamine phosphate + S-adenosyl-L-homocysteine + H(+). It carries out the reaction N-methylethanolamine phosphate + S-adenosyl-L-methionine = N,N-dimethylethanolamine phosphate + S-adenosyl-L-homocysteine + H(+). The enzyme catalyses N,N-dimethylethanolamine phosphate + S-adenosyl-L-methionine = phosphocholine + S-adenosyl-L-homocysteine + H(+). The protein operates within phospholipid metabolism; phosphatidylcholine biosynthesis; phosphocholine from phosphoethanolamine: step 1/1. In terms of biological role, involved in phosphocholine biosynthesis. Catalyzes the N-methylation of phosphoethanolamine, phosphomonomethylethanolamine and phosphodimethylethanolamine, the three methylation steps required to convert phosphoethanolamine to phosphocholine (PC). May be involved in root development. This is Phosphoethanolamine N-methyltransferase 1 from Zea mays (Maize).